Consider the following 853-residue polypeptide: Envelope glycoprotein gp160 (853 aa).

The signal sequence occupies residues 1 to 31; it reads MRVKEIRKNWQHLRGGILLLGMLMICSAAKE. Residues 32–681 lie on the Extracellular side of the membrane; it reads KTWVTIYYGV…ITNWLWYIRL (650 aa). The cysteines at positions 53 and 73 are disulfide-linked. 19 N-linked (GlcNAc...) asparagine; by host glycosylation sites follow: N87, N129, N134, N138, N157, N189, N199, N232, N236, N243, N264, N278, N291, N297, N303, N333, N340, N356, and N362. Cystine bridges form between C118-C207, C125-C198, C130-C158, C220-C249, and C230-C241. Residues 130-157 are V1; sequence CTNLNITKNTTNPTSSSWGMMEKGEIKN. The segment at 158 to 198 is V2; that stretch reads CSFYITTSIRNKVKKEYALFNRLDVVPIENTNNTKYRLISC. The interval 298-331 is V3; sequence CTRPNNNTRRRLSIGPGRAFYARRNIIGDIRQAH. Residues C298 and C332 are joined by a disulfide bond. Residues 364–374 are CD4-binding loop; the sequence is SSGGDPEIVMH. 2 cysteine pairs are disulfide-bonded: C378–C441 and C385–C414. Residues 385 to 414 form a V4 region; that stretch reads CNTAQLFNSTWNVTGGTNGTEGNDIITLQC. Residues N392, N396, N402, N444, and N456 are each glycosylated (N-linked (GlcNAc...) asparagine; by host). The interval 459-468 is V5; that stretch reads ETETEIFRPG. The segment at 509–529 is fusion peptide; that stretch reads AVGIGAVFLGFLGAAGSTMGA. The immunosuppression stretch occupies residues 571 to 589; that stretch reads KQLQARVLALERYLRDQQL. C595 and C601 form a disulfide bridge. N-linked (GlcNAc...) asparagine; by host glycosylation is found at N608, N613, N622, and N634. The stretch at 630–664 forms a coiled coil; the sequence is REIDNYTDYIYDLLEKSQTQQEKNEKELLELDKWA. The interval 659–680 is MPER; binding to GalCer; it reads ELDKWASLWNWFDITNWLWYIR. The chain crosses the membrane as a helical span at residues 682 to 702; that stretch reads FIMIVGGLIGLRIVFAVLSIV. Residues 703–853 lie on the Cytoplasmic side of the membrane; sequence NRVRQGYSPL…IRQGLERALL (151 aa). Residues 709 to 712 carry the YXXL motif; contains endocytosis signal motif; sequence YSPL. A disordered region spans residues 718–740; that stretch reads LPASRGPDRPEGTEEEGGERDRD. 2 S-palmitoyl cysteine; by host lipidation sites follow: C761 and C834. Residues 852–853 carry the Di-leucine internalization motif motif; sequence LL.

This sequence belongs to the HIV-1 env protein family. As to quaternary structure, the mature envelope protein (Env) consists of a homotrimer of non-covalently associated gp120-gp41 heterodimers. The resulting complex protrudes from the virus surface as a spike. There seems to be as few as 10 spikes on the average virion. Interacts with host CD4, CCR5 and CXCR4. Gp120 also interacts with the C-type lectins CD209/DC-SIGN and CLEC4M/DC-SIGNR (collectively referred to as DC-SIGN(R)). Gp120 and gp41 interact with GalCer. Gp120 interacts with host ITGA4/ITGB7 complex; on CD4+ T-cells, this interaction results in rapid activation of integrin ITGAL/LFA-1, which facilitates efficient cell-to-cell spreading of HIV-1. Gp120 interacts with cell-associated heparan sulfate; this interaction increases virus infectivity on permissive cells and may be involved in infection of CD4- cells. The mature envelope protein (Env) consists of a homotrimer of non-covalently associated gp120-gp41 heterodimers. The resulting complex protrudes from the virus surface as a spike. There seems to be as few as 10 spikes on the average virion. Post-translationally, highly glycosylated by host. The high number of glycan on the protein is reffered to as 'glycan shield' because it contributes to hide protein sequence from adaptive immune system. Palmitoylation of the transmembrane protein and of Env polyprotein (prior to its proteolytic cleavage) is essential for their association with host cell membrane lipid rafts. Palmitoylation is therefore required for envelope trafficking to classical lipid rafts, but not for viral replication. In terms of processing, specific enzymatic cleavages in vivo yield mature proteins. Envelope glycoproteins are synthesized as an inactive precursor that is heavily N-glycosylated and processed likely by host cell furin in the Golgi to yield the mature SU and TM proteins. The cleavage site between SU and TM requires the minimal sequence [KR]-X-[KR]-R. About 2 of the 9 disulfide bonds of gp41 are reduced by P4HB/PDI, following binding to CD4 receptor.

Its subcellular location is the virion membrane. It localises to the host cell membrane. It is found in the host endosome membrane. Its function is as follows. Oligomerizes in the host endoplasmic reticulum into predominantly trimers. In a second time, gp160 transits in the host Golgi, where glycosylation is completed. The precursor is then proteolytically cleaved in the trans-Golgi and thereby activated by cellular furin or furin-like proteases to produce gp120 and gp41. Attaches the virus to the host lymphoid cell by binding to the primary receptor CD4. This interaction induces a structural rearrangement creating a high affinity binding site for a chemokine coreceptor like CXCR4 and/or CCR5. Acts as a ligand for CD209/DC-SIGN and CLEC4M/DC-SIGNR, which are respectively found on dendritic cells (DCs), and on endothelial cells of liver sinusoids and lymph node sinuses. These interactions allow capture of viral particles at mucosal surfaces by these cells and subsequent transmission to permissive cells. HIV subverts the migration properties of dendritic cells to gain access to CD4+ T-cells in lymph nodes. Virus transmission to permissive T-cells occurs either in trans (without DCs infection, through viral capture and transmission), or in cis (following DCs productive infection, through the usual CD4-gp120 interaction), thereby inducing a robust infection. In trans infection, bound virions remain infectious over days and it is proposed that they are not degraded, but protected in non-lysosomal acidic organelles within the DCs close to the cell membrane thus contributing to the viral infectious potential during DCs' migration from the periphery to the lymphoid tissues. On arrival at lymphoid tissues, intact virions recycle back to DCs' cell surface allowing virus transmission to CD4+ T-cells. Functionally, acts as a class I viral fusion protein. Under the current model, the protein has at least 3 conformational states: pre-fusion native state, pre-hairpin intermediate state, and post-fusion hairpin state. During fusion of viral and target intracellular membranes, the coiled coil regions (heptad repeats) assume a trimer-of-hairpins structure, positioning the fusion peptide in close proximity to the C-terminal region of the ectodomain. The formation of this structure appears to drive apposition and subsequent fusion of viral and target cell membranes. Complete fusion occurs in host cell endosomes and is dynamin-dependent, however some lipid transfer might occur at the plasma membrane. The virus undergoes clathrin-dependent internalization long before endosomal fusion, thus minimizing the surface exposure of conserved viral epitopes during fusion and reducing the efficacy of inhibitors targeting these epitopes. Membranes fusion leads to delivery of the nucleocapsid into the cytoplasm. This chain is Envelope glycoprotein gp160, found in Human immunodeficiency virus type 1 group M subtype B (strain 89.6) (HIV-1).